Consider the following 362-residue polypeptide: uncharacterized protein (362 aa).

Belongs to the carbohydrate kinase PfkB family.

This is an uncharacterized protein from Escherichia coli (strain K12).